The following is a 297-amino-acid chain: Protease HtpX homolog (297 aa).

2 consecutive transmembrane segments (helical) span residues 5 to 25 (IFLF…VLTI) and 43 to 63 (LMAL…ISLG). H154 is a binding site for Zn(2+). The active site involves E155. H158 lines the Zn(2+) pocket. Helical transmembrane passes span 169–189 (LLQG…AWVA) and 203–223 (FIAM…VVFA). E229 serves as a coordination point for Zn(2+).

Belongs to the peptidase M48B family. Zn(2+) is required as a cofactor.

It is found in the cell membrane. The chain is Protease HtpX homolog from Bacillus velezensis (strain DSM 23117 / BGSC 10A6 / LMG 26770 / FZB42) (Bacillus amyloliquefaciens subsp. plantarum).